A 184-amino-acid chain; its full sequence is MQARDPHVNVIFVGLMGAGKTTVGRAVARRLDRPFFDSDHEIEARTGARIPVIFELEGEAGFRDREAQMIAELTQRENIVLATGGGAILRPENRKLLHERGLVVYLRANPHDLWLRTRKDKNRPLLQTDDPKAKLEALYEARDPLYRECAHFVIETGRPSVNGLVNMVLMQLEMAGIVAKPLQA.

Glycine 17–threonine 22 serves as a coordination point for ATP. A Mg(2+)-binding site is contributed by threonine 21. Residues aspartate 39, arginine 63, and glycine 85 each coordinate substrate. Arginine 123 is an ATP binding site. Position 142 (arginine 142) interacts with substrate.

Belongs to the shikimate kinase family. In terms of assembly, monomer. The cofactor is Mg(2+).

The protein resides in the cytoplasm. It carries out the reaction shikimate + ATP = 3-phosphoshikimate + ADP + H(+). Its pathway is metabolic intermediate biosynthesis; chorismate biosynthesis; chorismate from D-erythrose 4-phosphate and phosphoenolpyruvate: step 5/7. In terms of biological role, catalyzes the specific phosphorylation of the 3-hydroxyl group of shikimic acid using ATP as a cosubstrate. In Burkholderia pseudomallei (strain 1710b), this protein is Shikimate kinase.